Consider the following 79-residue polypeptide: Acyl carrier protein (79 aa).

The Carrier domain maps to 2–77 (SDIGERVKKI…DATKFLEKNA (76 aa)). Ser37 is subject to O-(pantetheine 4'-phosphoryl)serine.

Belongs to the acyl carrier protein (ACP) family. In terms of processing, 4'-phosphopantetheine is transferred from CoA to a specific serine of apo-ACP by AcpS. This modification is essential for activity because fatty acids are bound in thioester linkage to the sulfhydryl of the prosthetic group.

It is found in the cytoplasm. It functions in the pathway lipid metabolism; fatty acid biosynthesis. In terms of biological role, carrier of the growing fatty acid chain in fatty acid biosynthesis. The protein is Acyl carrier protein of Bradyrhizobium diazoefficiens (strain JCM 10833 / BCRC 13528 / IAM 13628 / NBRC 14792 / USDA 110).